The primary structure comprises 255 residues: Small ribosomal subunit protein eS4 (255 aa).

Residues 44-107 (IPLLILVRDV…DEYYRMIPYP (64 aa)) enclose the S4 RNA-binding domain.

It belongs to the eukaryotic ribosomal protein eS4 family.

In Ignicoccus hospitalis (strain KIN4/I / DSM 18386 / JCM 14125), this protein is Small ribosomal subunit protein eS4.